A 325-amino-acid polypeptide reads, in one-letter code: NADH-quinone oxidoreductase subunit H (325 aa).

8 helical membrane passes run 11–31 (ILLT…CGAF), 81–101 (VIFT…FAIV), 114–134 (IGIL…LFAG), 154–174 (LSYE…AGSF), 186–206 (VWNV…GVAV), 237–257 (FFVG…TLFF), 265–285 (LPPF…FILI), and 304–324 (ICLP…LWQA).

Belongs to the complex I subunit 1 family. As to quaternary structure, NDH-1 is composed of 13 different subunits. Subunits NuoA, H, J, K, L, M, N constitute the membrane sector of the complex.

It localises to the cell inner membrane. It catalyses the reaction a quinone + NADH + 5 H(+)(in) = a quinol + NAD(+) + 4 H(+)(out). Its function is as follows. NDH-1 shuttles electrons from NADH, via FMN and iron-sulfur (Fe-S) centers, to quinones in the respiratory chain. The immediate electron acceptor for the enzyme in this species is believed to be ubiquinone. Couples the redox reaction to proton translocation (for every two electrons transferred, four hydrogen ions are translocated across the cytoplasmic membrane), and thus conserves the redox energy in a proton gradient. This subunit may bind ubiquinone. The protein is NADH-quinone oxidoreductase subunit H of Shigella flexneri serotype 5b (strain 8401).